Consider the following 187-residue polypeptide: Casparian strip membrane protein 5 (187 aa).

At 1 to 24 (MKSGQAEIVETSKGIQKSGLMSRR) the chain is on the cytoplasmic side. A helical transmembrane segment spans residues 25-45 (IAILEFILRIVAFFNTIGSAI). At 46–74 (LMGTTHETLPFFTQFIRFQAEYNDLPALT) the chain is on the extracellular side. The helical transmembrane segment at 75 to 95 (FFVVANAVVSGYLIMSLTLAF) threads the bilayer. The Cytoplasmic portion of the chain corresponds to 96–107 (VHIVKRKTQNTR). The helical transmembrane segment at 108–128 (ILLIVLDVAMLGLLSAGASSA) threads the bilayer. The Extracellular segment spans residues 129–161 (AAIVYLAHNGNNKTNWFAICQQFNSFCERISGS). N-linked (GlcNAc...) asparagine glycosylation occurs at asparagine 140. Residues 162–182 (LIGSFIAVVLLILLILLSAIA) form a helical membrane-spanning segment. The Cytoplasmic portion of the chain corresponds to 183–187 (LSRRH).

The protein belongs to the Casparian strip membrane proteins (CASP) family. As to quaternary structure, homodimer and heterodimers.

It is found in the cell membrane. Its function is as follows. Regulates membrane-cell wall junctions and localized cell wall deposition. Required for establishment of the Casparian strip membrane domain (CSD) and the subsequent formation of Casparian strips, a cell wall modification of the root endodermis that determines an apoplastic barrier between the intraorganismal apoplasm and the extraorganismal apoplasm and prevents lateral diffusion. The sequence is that of Casparian strip membrane protein 5 from Arabidopsis lyrata subsp. lyrata (Lyre-leaved rock-cress).